A 389-amino-acid chain; its full sequence is Mitochondrial tRNA-specific 2-thiouridylase 1 (389 aa).

ATP contacts are provided by residues 8-15 (GVSGGVDS) and Met34. The interval 94-96 (NPD) is interaction with target base in tRNA. Cys99 functions as the Nucleophile in the catalytic mechanism. Cys99 and Cys205 form a disulfide bridge. Gly124 lines the ATP pocket. The tract at residues 154 to 156 (KDQ) is interaction with tRNA. The active-site Cysteine persulfide intermediate is the Cys205. An interaction with tRNA region spans residues 317 to 318 (QH).

It belongs to the MnmA/TRMU family.

It localises to the mitochondrion. The enzyme catalyses 5-taurinomethyluridine(34) in tRNA + S-sulfanyl-L-cysteinyl-[protein] + AH2 + ATP = 5-taurinomethyl-2-thiouridine(34) in tRNA + L-cysteinyl-[protein] + A + AMP + diphosphate + H(+). Catalyzes the 2-thiolation of uridine at the wobble position (U34) of mitochondrial tRNA(Lys), tRNA(Glu) and tRNA(Gln). Required for the formation of 5-taurinomethyl-2-thiouridine (tm5s2U) of mitochondrial tRNA(Lys), tRNA(Glu), and tRNA(Gln) at the wobble position. ATP is required to activate the C2 atom of the wobble base. The protein is Mitochondrial tRNA-specific 2-thiouridylase 1 of Drosophila melanogaster (Fruit fly).